The sequence spans 152 residues: Clitocypin-2 (152 aa).

The protein belongs to the protease inhibitor I48 family. In terms of assembly, homodimer. In terms of tissue distribution, expressed in all analyzed tissues, but expression was higher in the pileus and in the lower part of the stipe.

In terms of biological role, binds and inhibits cysteine proteinases. Inhibits most strongly papain and cathepsin L, more weakly bromelain and cathepsin B while it is completely ineffective against cathepsin H. The chain is Clitocypin-2 (clt2) from Clitocybe nebularis (Clouded agaric).